The chain runs to 542 residues: Mitogen-activated protein kinase 14 (542 aa).

A Protein kinase domain is found at 13 to 304; sequence YKIEEVIGKG…AEEALADPYF (292 aa). ATP is bound by residues 19-27 and K42; that span reads IGKGSYGVV. D139 (proton acceptor) is an active-site residue. At T175 the chain carries Phosphothreonine. Positions 175–177 match the TXY motif; that stretch reads TDY. Position 177 is a phosphotyrosine (Y177). Disordered regions lie at residues 388–412 and 482–542; these read STAAPPERQHNSLPRPCVVYSDNRP and RNPA…SGHW. A compositionally biased stretch (polar residues) spans 488 to 507; sequence PNSSVPLGSSYPRRNQTCKS.

This sequence belongs to the protein kinase superfamily. CMGC Ser/Thr protein kinase family. MAP kinase subfamily. Post-translationally, dually phosphorylated on Thr-175 and Tyr-177, which activates the enzyme.

It catalyses the reaction L-seryl-[protein] + ATP = O-phospho-L-seryl-[protein] + ADP + H(+). It carries out the reaction L-threonyl-[protein] + ATP = O-phospho-L-threonyl-[protein] + ADP + H(+). With respect to regulation, activated by threonine and tyrosine phosphorylation. This Oryza sativa subsp. japonica (Rice) protein is Mitogen-activated protein kinase 14 (MPK14).